A 213-amino-acid polypeptide reads, in one-letter code: Ras-related protein Rab-39B (213 aa).

The GTP site is built by Ser17, Gly20, Lys21, Ser22, Cys23, Ser37, and Thr40. Residue Ser22 coordinates Mg(2+). The switch-I stretch occupies residues 35 to 43 (QVSDPTVGV). Residues Thr40 and Asp64 each coordinate Mg(2+). Positions 67, 123, 124, 126, 154, and 155 each coordinate GTP. Positions 67–83 (GQERFRSITRAYYRNSV) are switch-II. At Ser201 the chain carries Phosphoserine. 2 S-geranylgeranyl cysteine lipidation sites follow: Cys211 and Cys213. Position 213 is a cysteine methyl ester (Cys213).

The protein belongs to the small GTPase superfamily. Rab family. In terms of assembly, interacts (GDP-bound) with C9orf72; C9orf72 in complex with SMCR8 acts as a GEF for RAB39B. Interacts (in GTP-bound form) with PICK1 (via PDZ domain); a PICK1 homodimer may allow simultaneous association of RAB39B and GRIA2 to PICK1 which is involved in GRIA2 trafficking. Interacts with isoform c of RASSF1; the interaction is strong. Interacts with isoform a of RASSF1; the interaction is weak. Interacts with the DLG4/PSD-95. Interacts (GTP-bound) with HOPS complex components VPS39 and VPS41. Requires Mg(2+) as cofactor.

The protein resides in the cell membrane. It localises to the cytoplasmic vesicle membrane. It is found in the golgi apparatus. The protein localises to the cytoplasmic vesicle. Its subcellular location is the autophagosome membrane. The protein resides in the autolysosome membrane. It carries out the reaction GTP + H2O = GDP + phosphate + H(+). With respect to regulation, regulated by guanine nucleotide exchange factors (GEFs) including C9orf72-SMCR8 complex, which promote the exchange of bound GDP for free GTP. Regulated by GTPase activating proteins (GAPs) which increase the GTP hydrolysis activity. Inhibited by GDP dissociation inhibitors (GDIs). Its function is as follows. The small GTPases Rab are key regulators of intracellular membrane trafficking, from the formation of transport vesicles to their fusion with membranes. Rabs cycle between an inactive GDP-bound form and an active GTP-bound form that is able to recruit to membranes different sets of downstream effectors directly responsible for vesicle formation, movement, tethering and fusion. RAB39B is involved in autophagy and may function in autophagosome formation. Binds downstream effector PICK1 to ensure selectively GRIA2 exit from the endoplasmic reticulum to the Golgi and to regulate AMPAR composition at the post-synapses and thus synaptic transmission. May regulate the homeostasis of SNCA/alpha-synuclein. This is Ras-related protein Rab-39B (RAB39B) from Bos taurus (Bovine).